A 321-amino-acid chain; its full sequence is Methionyl-tRNA formyltransferase (321 aa).

113–116 (SILP) lines the (6S)-5,6,7,8-tetrahydrofolate pocket.

It belongs to the Fmt family.

It carries out the reaction L-methionyl-tRNA(fMet) + (6R)-10-formyltetrahydrofolate = N-formyl-L-methionyl-tRNA(fMet) + (6S)-5,6,7,8-tetrahydrofolate + H(+). Its function is as follows. Attaches a formyl group to the free amino group of methionyl-tRNA(fMet). The formyl group appears to play a dual role in the initiator identity of N-formylmethionyl-tRNA by promoting its recognition by IF2 and preventing the misappropriation of this tRNA by the elongation apparatus. The sequence is that of Methionyl-tRNA formyltransferase from Pseudoalteromonas translucida (strain TAC 125).